Reading from the N-terminus, the 465-residue chain is Intraflagellar transport protein 54 (465 aa).

2 disordered regions span residues 119 to 301 (VRSN…GFTM) and 347 to 366 (LHGDGSKKPTGLSTQRDKKP). Residues 144–207 (LEALAREKAE…KQKQQQQQQQ (64 aa)) adopt a coiled-coil conformation. Positions 146–198 (ALAREKAEKERQRREQEQQERERKERERQEKEREEREKHELESRERAEAEQWK) are enriched in basic and acidic residues. Residues 199-220 (QKQQQQQQQQQSAISPQKSPPK) show a composition bias toward low complexity. The segment covering 222–242 (RFADDDKTRVEEHQPVIERPH) has biased composition (basic and acidic residues).

Belongs to the TRAF3IP1 family.

It localises to the cell projection. Its subcellular location is the cilium. The protein resides in the flagellum. The protein localises to the cytoplasm. It is found in the cytoskeleton. It localises to the flagellum axoneme. Its subcellular location is the flagellum basal body. Functionally, component of the intraflagellar transport complex B (IFT-B) involved in flagellar assembly. The polypeptide is Intraflagellar transport protein 54 (Giardia intestinalis (strain ATCC 50803 / WB clone C6) (Giardia lamblia)).